A 236-amino-acid chain; its full sequence is Protein EVI2A (236 aa).

A signal peptide spans 1-30 (MPTDMEHTGHYLHLAFLMTTVFSLSPGTKA). N-linked (GlcNAc...) asparagine glycosylation is found at Asn31, Asn38, Asn49, Asn73, and Asn112. Residues 31-133 (NYTRLWANST…DVCAENNNNM (103 aa)) lie on the Extracellular side of the membrane. The helical transmembrane segment at 134-154 (AMLICLIIIAVLFLICTFLFL) threads the bilayer. Over 155–236 (STVVLANKVS…TEKLTNKQIG (82 aa)) the chain is Cytoplasmic. Phosphoserine is present on Ser211. Residues 217–236 (ATRERKDEEGTEKLTNKQIG) are disordered. The segment covering 218 to 236 (TRERKDEEGTEKLTNKQIG) has biased composition (basic and acidic residues).

Belongs to the EVI2A family.

The protein resides in the membrane. Functionally, may complex with itself or/and other proteins within the membrane, to function as part of a cell-surface receptor. The protein is Protein EVI2A (EVI2A) of Homo sapiens (Human).